Consider the following 312-residue polypeptide: Glycine--tRNA ligase alpha subunit (312 aa).

It belongs to the class-II aminoacyl-tRNA synthetase family. As to quaternary structure, tetramer of two alpha and two beta subunits.

The protein resides in the cytoplasm. The catalysed reaction is tRNA(Gly) + glycine + ATP = glycyl-tRNA(Gly) + AMP + diphosphate. In Thiobacillus denitrificans (strain ATCC 25259 / T1), this protein is Glycine--tRNA ligase alpha subunit.